Consider the following 187-residue polypeptide: Large ribosomal subunit protein uL6 (187 aa).

Residues 151–170 (EAARIRSLRPPEPYKGKGIK) form a disordered region.

It belongs to the universal ribosomal protein uL6 family. As to quaternary structure, part of the 50S ribosomal subunit.

This protein binds to the 23S rRNA, and is important in its secondary structure. It is located near the subunit interface in the base of the L7/L12 stalk, and near the tRNA binding site of the peptidyltransferase center. The chain is Large ribosomal subunit protein uL6 from Chloroflexus aurantiacus (strain ATCC 29366 / DSM 635 / J-10-fl).